The following is a 317-amino-acid chain: Ubiquinone biosynthesis protein COQ9-A, mitochondrial (317 aa).

A mitochondrion-targeting transit peptide spans 1–46 (MAASVTRVLKGAGGRQLLLMVARRRPVLMQPFLLMPRKFWVSSALR). The disordered stretch occupies residues 50–97 (QRQPPFSASSTHAETQGHAEEQYQQKQPPPRYTDQAGEESEGYESEEQ). Positions 53–63 (PPFSASSTHAE) are enriched in polar residues. Acidic residues predominate over residues 85–96 (AGEESEGYESEE). Arg-243 is an a 1,2-diacylglycero-3-phosphoethanolamine binding site.

Belongs to the COQ9 family. In terms of assembly, homodimer. Heterodimer; two heterodimers of COQ7:COQ9 come together on the same side of the lipid pseudo-bilayer and form a curved tetramer with a hydrophobic surface suitable for membrane interaction. These two tetramers assemble into a soluble octamer with a pseudo-bilayer of lipids captured within. Interacts with COQ7; this interaction allows ubiquinone (CoQ) isoprene intermediates presentation to COQ7 and facilitates the COQ7-mediated hydroxylase step.

The protein localises to the mitochondrion. Its pathway is cofactor biosynthesis; ubiquinone biosynthesis. In terms of biological role, membrane-associated protein that warps the membrane surface to access and bind aromatic isoprenes with high specificity, including ubiquinone (CoQ) isoprene intermediates and presents them directly to COQ7, therefore facilitating the COQ7-mediated hydroxylase step. Participates in the biosynthesis of coenzyme Q, also named ubiquinone, an essential lipid-soluble electron transporter for aerobic cellular respiration. This is Ubiquinone biosynthesis protein COQ9-A, mitochondrial (coq9-a) from Xenopus laevis (African clawed frog).